Here is a 428-residue protein sequence, read N- to C-terminus: Glutamate-1-semialdehyde 2,1-aminomutase 1 (428 aa).

Lys-268 bears the N6-(pyridoxal phosphate)lysine mark.

It belongs to the class-III pyridoxal-phosphate-dependent aminotransferase family. HemL subfamily. Homodimer. The cofactor is pyridoxal 5'-phosphate.

The protein resides in the cytoplasm. The enzyme catalyses (S)-4-amino-5-oxopentanoate = 5-aminolevulinate. It participates in porphyrin-containing compound metabolism; protoporphyrin-IX biosynthesis; 5-aminolevulinate from L-glutamyl-tRNA(Glu): step 2/2. The chain is Glutamate-1-semialdehyde 2,1-aminomutase 1 from Bacillus cereus (strain G9842).